The primary structure comprises 889 residues: Translation initiation factor IF-2 (889 aa).

A disordered region spans residues 158–296; sequence LKEKQEKRRQ…KYKSDELQSQ (139 aa). Over residues 209–228 the composition is skewed to low complexity; the sequence is AAATPATSTAPATTSTTAAT. Positions 238 to 270 are enriched in basic and acidic residues; that stretch reads VKPEEKGEKKKKPTKQDAWKDEPVKRREPKARG. The region spanning 391 to 560 is the tr-type G domain; sequence PRAPVVTVMG…LLQAEVLELK (170 aa). A G1 region spans residues 400 to 407; it reads GHVDHGKT. 400-407 is a binding site for GTP; sequence GHVDHGKT. The segment at 425-429 is G2; the sequence is GITQH. A G3 region spans residues 446-449; it reads DTPG. GTP contacts are provided by residues 446-450 and 500-503; these read DTPGH and NKMD. A G4 region spans residues 500–503; it reads NKMD. Residues 536–538 are G5; sequence SAK.

This sequence belongs to the TRAFAC class translation factor GTPase superfamily. Classic translation factor GTPase family. IF-2 subfamily.

Its subcellular location is the cytoplasm. Its function is as follows. One of the essential components for the initiation of protein synthesis. Protects formylmethionyl-tRNA from spontaneous hydrolysis and promotes its binding to the 30S ribosomal subunits. Also involved in the hydrolysis of GTP during the formation of the 70S ribosomal complex. This chain is Translation initiation factor IF-2, found in Nitrosomonas europaea (strain ATCC 19718 / CIP 103999 / KCTC 2705 / NBRC 14298).